The primary structure comprises 363 residues: DNA replication and repair protein RecF (363 aa).

30 to 37 (GDNAQGKT) serves as a coordination point for ATP.

Belongs to the RecF family.

The protein resides in the cytoplasm. In terms of biological role, the RecF protein is involved in DNA metabolism; it is required for DNA replication and normal SOS inducibility. RecF binds preferentially to single-stranded, linear DNA. It also seems to bind ATP. The sequence is that of DNA replication and repair protein RecF from Syntrophotalea carbinolica (strain DSM 2380 / NBRC 103641 / GraBd1) (Pelobacter carbinolicus).